The sequence spans 359 residues: MKKYLALALIAPLLISCSTTKKGDTYNEAWVKDTNGFDILMGQFAHNIENIWGFKEVVIAGPKDYVKYTDQYQTRSHINFDDGTITIETIAGTEPAAHLRRAIIKTLLMGDDPSSVDLYSDVDDITISKEPFLYGQVVDNTGQPIRWEGRASNFADYLLKNRLKSRSNGLRIIYSVTINMVPNHLDKRAHKYLGMVRQASRKYGVDESLILAIMQTESSFNPYAVSRSDALGLMQVVQHTAGKDVFRSQGKSGTPSRSFLFDPASNIDTGTAYLAMLNNVYLGGIDNPTSRRYAVITAYNGGAGSVLRVFSNDKIQAANIINTMTPGDVYQTLTTRHPSAESRRYLYKVNTAQKSYRRR.

Positions M1–S16 are cleaved as a signal peptide. A lipid anchor (N-palmitoyl cysteine) is attached at C17. C17 carries the S-diacylglycerol cysteine lipid modification.

Belongs to the transglycosylase Slt family.

It is found in the cell outer membrane. The catalysed reaction is Exolytic cleavage of the (1-&gt;4)-beta-glycosidic linkage between N-acetylmuramic acid (MurNAc) and N-acetylglucosamine (GlcNAc) residues in peptidoglycan, from either the reducing or the non-reducing ends of the peptidoglycan chains, with concomitant formation of a 1,6-anhydrobond in the MurNAc residue.. Murein-degrading enzyme. May play a role in recycling of muropeptides during cell elongation and/or cell division. The protein is Membrane-bound lytic murein transglycosylase C of Escherichia coli O127:H6 (strain E2348/69 / EPEC).